Consider the following 412-residue polypeptide: Pyruvate dehydrogenase E1 component subunit alpha, mitochondrial (412 aa).

Pyruvate contacts are provided by histidine 104, tyrosine 130, arginine 131, alanine 169, glycine 177, valine 179, aspartate 208, glycine 209, alanine 210, asparagine 237, and tyrosine 239. Thiamine diphosphate is bound by residues tyrosine 130 and arginine 131. Positions 177, 179, 208, 209, 210, and 237 each coordinate thiamine diphosphate. Aspartate 208 contacts Mg(2+). 2 residues coordinate Mg(2+): asparagine 237 and tyrosine 239. Histidine 304 serves as a coordination point for thiamine diphosphate.

Tetramer of 2 alpha and 2 beta subunits. The cofactor is thiamine diphosphate. Requires Mg(2+) as cofactor.

It is found in the mitochondrion matrix. The enzyme catalyses N(6)-[(R)-lipoyl]-L-lysyl-[protein] + pyruvate + H(+) = N(6)-[(R)-S(8)-acetyldihydrolipoyl]-L-lysyl-[protein] + CO2. E1 activity is regulated by phosphorylation (inactivation) and dephosphorylation (activation) of the alpha subunit. In terms of biological role, the pyruvate dehydrogenase complex catalyzes the overall conversion of pyruvate to acetyl-CoA and CO(2). It contains multiple copies of three enzymatic components: pyruvate dehydrogenase (E1), dihydrolipoamide acetyltransferase (E2) and lipoamide dehydrogenase (E3). This is Pyruvate dehydrogenase E1 component subunit alpha, mitochondrial (PDA1) from Kluyveromyces lactis (strain ATCC 8585 / CBS 2359 / DSM 70799 / NBRC 1267 / NRRL Y-1140 / WM37) (Yeast).